The sequence spans 228 residues: Cytidylate kinase (228 aa).

Position 12-20 (12-20) interacts with ATP; that stretch reads GPSGSGKGT.

It belongs to the cytidylate kinase family. Type 1 subfamily.

It localises to the cytoplasm. It catalyses the reaction CMP + ATP = CDP + ADP. It carries out the reaction dCMP + ATP = dCDP + ADP. The protein is Cytidylate kinase of Pseudomonas entomophila (strain L48).